The following is an 831-amino-acid chain: Heat shock 70 kDa protein 15 (831 aa).

Disordered stretches follow at residues 502-579 (EEEV…KKKV) and 784-831 (IMTK…EGST). The span at 512–526 (DQSEETAKMDTDKAS) shows a compositional bias: basic and acidic residues. Phosphoserine is present on residues Ser-533 and Ser-536. Residues 787–800 (KPKPAAKAEAPQAK) are compositionally biased toward low complexity.

This sequence belongs to the heat shock protein 70 (TC 1.A.33) family. HSP110/SSE subfamily.

The protein resides in the cytoplasm. The protein localises to the nucleus. Functionally, in cooperation with other chaperones, Hsp70s are key components that facilitate folding of de novo synthesized proteins, assist translocation of precursor proteins into organelles, and are responsible for degradation of damaged protein under stress conditions. The sequence is that of Heat shock 70 kDa protein 15 (HSP70-15) from Arabidopsis thaliana (Mouse-ear cress).